Consider the following 582-residue polypeptide: Proline--tRNA ligase (582 aa).

The protein belongs to the class-II aminoacyl-tRNA synthetase family. ProS type 1 subfamily. As to quaternary structure, homodimer.

The protein resides in the cytoplasm. It catalyses the reaction tRNA(Pro) + L-proline + ATP = L-prolyl-tRNA(Pro) + AMP + diphosphate. In terms of biological role, catalyzes the attachment of proline to tRNA(Pro) in a two-step reaction: proline is first activated by ATP to form Pro-AMP and then transferred to the acceptor end of tRNA(Pro). As ProRS can inadvertently accommodate and process non-cognate amino acids such as alanine and cysteine, to avoid such errors it has two additional distinct editing activities against alanine. One activity is designated as 'pretransfer' editing and involves the tRNA(Pro)-independent hydrolysis of activated Ala-AMP. The other activity is designated 'posttransfer' editing and involves deacylation of mischarged Ala-tRNA(Pro). The misacylated Cys-tRNA(Pro) is not edited by ProRS. The chain is Proline--tRNA ligase from Mycobacterium ulcerans (strain Agy99).